The following is a 57-amino-acid chain: MITPIGKNSNSNSNSNSNSNSNSNSNSNSNSNSNSNSNSNSNSNSNSNSNSNSNSNN.

A disordered region spans residues 1-57 (MITPIGKNSNSNSNSNSNSNSNSNSNSNSNSNSNSNSNSNSNSNSNSNSNSNSNSNN). The span at 8–57 (NSNSNSNSNSNSNSNSNSNSNSNSNSNSNSNSNSNSNSNSNSNSNSNSNN) shows a compositional bias: low complexity.

This is an uncharacterized protein from Dictyostelium discoideum (Social amoeba).